Consider the following 263-residue polypeptide: LIM and SH3 domain protein 1 (263 aa).

At Met-1 the chain carries N-acetylmethionine. One can recognise an LIM zinc-binding domain in the interval 3 to 63 (PNCARCGKIV…NAHYPKQSFT (61 aa)). An N6-acetyllysine modification is found at Lys-42. Nebulin repeat units follow at residues 64–95 (MVADTPENLRLKQQSELQSQVRYKEEFEKNKG) and 97–131 (GFSVVADTPELQRIKKTQDQISNIKYHEEFEKSRM). Thr-68 is modified (phosphothreonine). Lys-75 bears the N6-methyllysine mark. A Phosphoserine modification is found at Ser-99. Thr-104 bears the Phosphothreonine mark. Lys-112 bears the N6-succinyllysine mark. Phosphoserine occurs at positions 118 and 134. Residues 122–207 (YHEEFEKSRM…QRSAPGGGGK (86 aa)) form a disordered region. Over residues 148 to 162 (DSSSYRRPTEQQQPQ) the composition is skewed to polar residues. Residues 204–263 (GGGKRYRAVYDYSAADEDEVSFQDGDTIVNVQQIDDGWMYGTVERTGDTGMLPANYVEAI) enclose the SH3 domain.

In terms of assembly, interacts with F-actin. Interacts with ANKRD54. Interacts with KBTBD10. Post-translationally, phosphorylated. As to expression, expressed in a wide range of tissues (but not the heart or skeletal muscle), the expression is specific for certain actin-rich cell types within these tissues. Expression is prominent in the cortical regions of ion-transporting duct cells in the pancreas, in the salivary parotid gland and in certain F-actin-rich cells in the distal tubule/collecting duct. In primary cultures of gastric fibroblasts, expression is mainly within the tips of lamellipodia and at the leading edges of membrane ruffles.

The protein resides in the cytoplasm. It localises to the cell cortex. The protein localises to the cytoskeleton. Its function is as follows. Plays an important role in the regulation of dynamic actin-based, cytoskeletal activities. Agonist-dependent changes in LASP1 phosphorylation may also serve to regulate actin-associated ion transport activities, not only in the parietal cell but also in certain other F-actin-rich secretory epithelial cell types. This is LIM and SH3 domain protein 1 from Rattus norvegicus (Rat).